Here is a 759-residue protein sequence, read N- to C-terminus: Olfactomedin-like protein 2B (759 aa).

The first 20 residues, 1-20 (MAKSLLLVLCFALVTTLGWG), serve as a signal peptide directing secretion. Coiled coils occupy residues 40–68 (TEDETLQNEADNQENVLSQLLGDYDKVKA) and 179–209 (KLEEEISKNLTKENEQIREDVEEIRTEMNKR). Asn187 and Asn213 each carry an N-linked (GlcNAc...) asparagine glycan. 2 disordered regions span residues 346 to 396 (TRRP…VSAS) and 456 to 494 (THTAPVPPPPVRTDSPGKDSTARQGTVPPGPTLSPEEED). The segment covering 356 to 396 (AAVTADAGTTSAGTPTTALPSARLPASTAAPSTPDPAVSAS) has biased composition (low complexity). Residues 502–759 (RCKDTLSTIT…QVTYHVIFAY (258 aa)) enclose the Olfactomedin-like domain. A disulfide bridge connects residues Cys503 and Cys689. Asn704 carries an N-linked (GlcNAc...) asparagine glycan.

Homodimer. Binds to heparin and chondroitin sulfate E. O-glycosylated and N-glycosylated.

The protein localises to the secreted. The polypeptide is Olfactomedin-like protein 2B (OLFML2B) (Bos taurus (Bovine)).